The following is a 637-amino-acid chain: Threonine--tRNA ligase (637 aa).

Residues 1 to 61 (MPVITLPDGS…DKDAELAIVT (61 aa)) form the TGS domain. Residues 242 to 533 (DHRKIGKKLG…LIEHYEGAFP (292 aa)) are catalytic. 3 residues coordinate Zn(2+): cysteine 333, histidine 384, and histidine 510.

It belongs to the class-II aminoacyl-tRNA synthetase family. As to quaternary structure, homodimer. The cofactor is Zn(2+).

It localises to the cytoplasm. It carries out the reaction tRNA(Thr) + L-threonine + ATP = L-threonyl-tRNA(Thr) + AMP + diphosphate + H(+). Its function is as follows. Catalyzes the attachment of threonine to tRNA(Thr) in a two-step reaction: L-threonine is first activated by ATP to form Thr-AMP and then transferred to the acceptor end of tRNA(Thr). Also edits incorrectly charged L-seryl-tRNA(Thr). This Hahella chejuensis (strain KCTC 2396) protein is Threonine--tRNA ligase.